The sequence spans 545 residues: 4-coumarate--CoA ligase 1 (545 aa).

ATP is bound by residues Ser192, Ser193, Gly194, Thr195, Thr196, and Lys200. Positions 242 and 246 each coordinate (E)-4-coumaroyl-AMP. Residue Lys263 coordinates CoA. The segment at 265–334 is SBD1; the sequence is DIAQFLELIP…AKFPNAKLGQ (70 aa). (E)-4-coumaroyl-AMP-binding residues include Ala312, Gln334, Gly335, Thr339, and Met347. Residues Gln334, Gly335, and Thr339 each contribute to the ATP site. The segment at 335-402 is SBD2; the sequence is GYGMTEAGPV…IRGDQIMKGY (68 aa). 2 residues coordinate ATP: Asp423 and Arg438. Positions 440 and 444 each coordinate (E)-4-coumaroyl-AMP. Lys446 and Gly447 together coordinate CoA. Lys529 is an ATP binding site.

This sequence belongs to the ATP-dependent AMP-binding enzyme family. Mg(2+) serves as cofactor.

The enzyme catalyses (E)-4-coumarate + ATP + CoA = (E)-4-coumaroyl-CoA + AMP + diphosphate. It carries out the reaction (E)-4-coumarate + ATP + H(+) = (E)-4-coumaroyl-AMP + diphosphate. It catalyses the reaction (E)-4-coumaroyl-AMP + CoA = (E)-4-coumaroyl-CoA + AMP + H(+). It participates in phytoalexin biosynthesis; 3,4',5-trihydroxystilbene biosynthesis; 3,4',5-trihydroxystilbene from trans-4-coumarate: step 1/2. Functionally, carboxylate--CoA ligase that may use 4-coumarate as substrate. Follows a two-step reaction mechanism, wherein the carboxylate substrate first undergoes adenylation by ATP, followed by a thioesterification in the presence of CoA to yield the final CoA thioester. This is 4-coumarate--CoA ligase 1 (4CL1) from Solanum tuberosum (Potato).